Reading from the N-terminus, the 520-residue chain is 3-phosphoshikimate 1-carboxyvinyltransferase, chloroplastic (520 aa).

A chloroplast-targeting transit peptide spans 1 to 76 (MAQVSRICNG…KVMSSVSTAE (76 aa)). Residues 20–39 (LSKSSQRKSPLSVSLKTQQH) are disordered. 3-phosphoshikimate-binding residues include Lys-99, Ser-100, and Arg-104. Lys-99 lines the phosphoenolpyruvate pocket. The phosphoenolpyruvate site is built by Gly-177 and Arg-207. Residues Ser-254, Ser-255, Gln-256, Ser-282, Asp-407, and Lys-434 each coordinate 3-phosphoshikimate. Gln-256 contributes to the phosphoenolpyruvate binding site. The active-site Proton acceptor is Asp-407. Residues Arg-438, Arg-480, and Lys-505 each contribute to the phosphoenolpyruvate site.

Belongs to the EPSP synthase family.

It localises to the plastid. The protein localises to the chloroplast. The catalysed reaction is 3-phosphoshikimate + phosphoenolpyruvate = 5-O-(1-carboxyvinyl)-3-phosphoshikimate + phosphate. It functions in the pathway metabolic intermediate biosynthesis; chorismate biosynthesis; chorismate from D-erythrose 4-phosphate and phosphoenolpyruvate: step 6/7. Catalyzes the transfer of the enolpyruvyl moiety of phosphoenolpyruvate (PEP) to the 5-hydroxyl of shikimate-3-phosphate (S3P) to produce enolpyruvyl shikimate-3-phosphate and inorganic phosphate. The chain is 3-phosphoshikimate 1-carboxyvinyltransferase, chloroplastic from Arabidopsis thaliana (Mouse-ear cress).